We begin with the raw amino-acid sequence, 249 residues long: 1-(5-phosphoribosyl)-5-[(5-phosphoribosylamino)methylideneamino] imidazole-4-carboxamide isomerase (249 aa).

The active-site Proton acceptor is Asp8. Asp129 acts as the Proton donor in catalysis.

This sequence belongs to the HisA/HisF family.

Its subcellular location is the cytoplasm. The catalysed reaction is 1-(5-phospho-beta-D-ribosyl)-5-[(5-phospho-beta-D-ribosylamino)methylideneamino]imidazole-4-carboxamide = 5-[(5-phospho-1-deoxy-D-ribulos-1-ylimino)methylamino]-1-(5-phospho-beta-D-ribosyl)imidazole-4-carboxamide. It functions in the pathway amino-acid biosynthesis; L-histidine biosynthesis; L-histidine from 5-phospho-alpha-D-ribose 1-diphosphate: step 4/9. The polypeptide is 1-(5-phosphoribosyl)-5-[(5-phosphoribosylamino)methylideneamino] imidazole-4-carboxamide isomerase (Rhizobium rhizogenes (strain K84 / ATCC BAA-868) (Agrobacterium radiobacter)).